The sequence spans 331 residues: Biotin synthase (331 aa).

The region spanning 40–269 (YRVQLASLLS…HARVRLSAGR (230 aa)) is the Radical SAM core domain. Cysteine 55, cysteine 59, and cysteine 62 together coordinate [4Fe-4S] cluster. [2Fe-2S] cluster contacts are provided by cysteine 100, cysteine 132, cysteine 192, and arginine 264.

It belongs to the radical SAM superfamily. Biotin synthase family. Homodimer. The cofactor is [4Fe-4S] cluster. Requires [2Fe-2S] cluster as cofactor.

It carries out the reaction (4R,5S)-dethiobiotin + (sulfur carrier)-SH + 2 reduced [2Fe-2S]-[ferredoxin] + 2 S-adenosyl-L-methionine = (sulfur carrier)-H + biotin + 2 5'-deoxyadenosine + 2 L-methionine + 2 oxidized [2Fe-2S]-[ferredoxin]. The protein operates within cofactor biosynthesis; biotin biosynthesis; biotin from 7,8-diaminononanoate: step 2/2. Catalyzes the conversion of dethiobiotin (DTB) to biotin by the insertion of a sulfur atom into dethiobiotin via a radical-based mechanism. The chain is Biotin synthase from Synechococcus sp. (strain CC9605).